Here is a 365-residue protein sequence, read N- to C-terminus: MAGNSIGQLFKVSTFGESHGVALGGVVDGTPAGLEITEADLQIDLDRRKPGQSRYTTQRREDDQIKILSGVFEGKTTGTSIGLLIENTDQRSKDYGKIKDVFRPGHGDYTYWHKYGLRDYRGGGRSSARETAIRVAAGSIAKKYLKQFHGIEIKACLSQLGPIKADVFDWNEVENNLFFFPDVSKLEALDEYMRGLKKQGDSVGAKVKVVASNVPVGLGEPVFDRLDAELAHSLMSINAVKGVEIGDGFDVIEQKGSEHRDELTPNGFTSNHAGGVLAGISTGQDIIASIALKPTSSITIPGNSINTENEAVEMITKGRHDPCVGIRAVPIAEAMMAITLMDHLLRQRGQNPHVHHEHGPIPGSV.

NADP(+) contacts are provided by arginine 48 and arginine 54. FMN is bound by residues 125–127 (RSS), 238–239 (NA), alanine 278, 293–297 (KPTSS), and arginine 319.

The protein belongs to the chorismate synthase family. Homotetramer. FMNH2 is required as a cofactor.

It catalyses the reaction 5-O-(1-carboxyvinyl)-3-phosphoshikimate = chorismate + phosphate. Its pathway is metabolic intermediate biosynthesis; chorismate biosynthesis; chorismate from D-erythrose 4-phosphate and phosphoenolpyruvate: step 7/7. Its function is as follows. Catalyzes the anti-1,4-elimination of the C-3 phosphate and the C-6 proR hydrogen from 5-enolpyruvylshikimate-3-phosphate (EPSP) to yield chorismate, which is the branch point compound that serves as the starting substrate for the three terminal pathways of aromatic amino acid biosynthesis. This reaction introduces a second double bond into the aromatic ring system. This Pseudoalteromonas translucida (strain TAC 125) protein is Chorismate synthase.